A 271-amino-acid polypeptide reads, in one-letter code: MGLAAARNKQRFGLDPRNTTWSNNTSRFGHKHLEKLGWKPGSGLGLVPDSTTSHIKVSIKDDNLGLGAKLKKKEKQDEFDSGECTGLDVFQRLLGRLNGNEQTISDELDKQRTDNIINGKWGIHFVKGEVLASTWDAENKQLISYSMGKKRPVEGSSDSEVSDRKKTKKVKKEKKVKKVKKEKKEKKEKKDKKEKKVKKEKKEKKEKKLKDKHSKDTNEITRDQMLKPRDSAAVVPDAVSTRLSVRAKWIRQKRAAVMDAKALNEIFMVTD.

2 disordered regions span residues 1-26 and 149-233; these read MGLAAARNKQRFGLDPRNTTWSNNTS and KKRP…DSAA. Polar residues predominate over residues 17–26; that stretch reads RNTTWSNNTS. The 47-residue stretch at 25–71 folds into the G-patch domain; that stretch reads TSRFGHKHLEKLGWKPGSGLGLVPDSTTSHIKVSIKDDNLGLGAKLK. A compositionally biased stretch (basic residues) spans 165-205; that stretch reads KKTKKVKKEKKVKKVKKEKKEKKEKKDKKEKKVKKEKKEKK. Over residues 206–230 the composition is skewed to basic and acidic residues; sequence EKKLKDKHSKDTNEITRDQMLKPRD.

This sequence belongs to the PINX1 family.

It localises to the nucleus. The protein resides in the nucleolus. Its function is as follows. Involved in rRNA-processing at A0, A1 and A2 sites and negatively regulates telomerase. The chain is Protein PXR1 (PXR1) from Kluyveromyces lactis (strain ATCC 8585 / CBS 2359 / DSM 70799 / NBRC 1267 / NRRL Y-1140 / WM37) (Yeast).